Here is a 331-residue protein sequence, read N- to C-terminus: uncharacterized protein (331 aa).

It to bacterial alkanal monooxygenase alpha and beta chains.

This is an uncharacterized protein from Bacillus subtilis (strain 168).